The following is a 201-amino-acid chain: Probable GTP-binding protein EngB (201 aa).

The EngB-type G domain maps to 22 to 195; the sequence is TQPEFAFAGK…WRCIEQFLEV (174 aa). Residues 30–37, 57–61, 75–78, 142–145, and 174–176 contribute to the GTP site; these read GKSNVGKS, GKTQT, DLPG, TKLD, and FSS. The Mg(2+) site is built by S37 and T59.

This sequence belongs to the TRAFAC class TrmE-Era-EngA-EngB-Septin-like GTPase superfamily. EngB GTPase family. It depends on Mg(2+) as a cofactor.

Its function is as follows. Necessary for normal cell division and for the maintenance of normal septation. The protein is Probable GTP-binding protein EngB of Lachnoclostridium phytofermentans (strain ATCC 700394 / DSM 18823 / ISDg) (Clostridium phytofermentans).